Reading from the N-terminus, the 287-residue chain is Ret finger protein-like 4A-like protein 1 (287 aa).

The RING-type; degenerate zinc finger occupies 11-53 (CPVCLKDLEEAVQLKCGYACCLQCLNSLQKEPDGEGLLCRFCS). The 199-residue stretch at 78 to 276 (EPKLKSVLTM…LSICSVINPS (199 aa)) folds into the B30.2/SPRY domain.

This chain is Ret finger protein-like 4A-like protein 1 (RFPL4AL1), found in Homo sapiens (Human).